An 89-amino-acid polypeptide reads, in one-letter code: Small ribosomal subunit protein uS15 (89 aa).

The protein belongs to the universal ribosomal protein uS15 family. Part of the 30S ribosomal subunit. Forms a bridge to the 50S subunit in the 70S ribosome, contacting the 23S rRNA.

Its function is as follows. One of the primary rRNA binding proteins, it binds directly to 16S rRNA where it helps nucleate assembly of the platform of the 30S subunit by binding and bridging several RNA helices of the 16S rRNA. Forms an intersubunit bridge (bridge B4) with the 23S rRNA of the 50S subunit in the ribosome. The chain is Small ribosomal subunit protein uS15 from Chloroherpeton thalassium (strain ATCC 35110 / GB-78).